The primary structure comprises 287 residues: 2-dehydro-3-deoxyphosphooctonate aldolase (287 aa).

The protein belongs to the KdsA family.

The protein localises to the cytoplasm. The catalysed reaction is D-arabinose 5-phosphate + phosphoenolpyruvate + H2O = 3-deoxy-alpha-D-manno-2-octulosonate-8-phosphate + phosphate. The protein operates within carbohydrate biosynthesis; 3-deoxy-D-manno-octulosonate biosynthesis; 3-deoxy-D-manno-octulosonate from D-ribulose 5-phosphate: step 2/3. It participates in bacterial outer membrane biogenesis; lipopolysaccharide biosynthesis. This chain is 2-dehydro-3-deoxyphosphooctonate aldolase, found in Rhodopseudomonas palustris (strain HaA2).